The following is a 197-amino-acid chain: Lymphotoxin-alpha (197 aa).

The signal sequence occupies residues 1 to 26 (MTPPGRLYLPLLLGLLLAPPPPGAQG). Positions 55–197 (PAAHLVGDPS…SSVFFGAFAL (143 aa)) constitute a THD domain. Asn-88 carries an N-linked (GlcNAc...) asparagine glycan. The cysteines at positions 112 and 148 are disulfide-linked.

This sequence belongs to the tumor necrosis factor family. As to quaternary structure, homotrimer, and heterotrimer of either two LTB and one LTA subunits or (less prevalent) two LTA and one LTB subunits. Interacts with TNFRSF14.

Its subcellular location is the secreted. It localises to the membrane. In terms of biological role, cytokine that in its homotrimeric form binds to TNFRSF1A/TNFR1, TNFRSF1B/TNFBR and TNFRSF14/HVEM. In its heterotrimeric form with LTB binds to TNFRSF3/LTBR. Lymphotoxin is produced by lymphocytes and is cytotoxic for a wide range of tumor cells in vitro and in vivo. The chain is Lymphotoxin-alpha (LTA) from Oryctolagus cuniculus (Rabbit).